Reading from the N-terminus, the 478-residue chain is Aspartyl/glutamyl-tRNA(Asn/Gln) amidotransferase subunit B (478 aa).

The protein belongs to the GatB/GatE family. GatB subfamily. Heterotrimer of A, B and C subunits.

The catalysed reaction is L-glutamyl-tRNA(Gln) + L-glutamine + ATP + H2O = L-glutaminyl-tRNA(Gln) + L-glutamate + ADP + phosphate + H(+). It carries out the reaction L-aspartyl-tRNA(Asn) + L-glutamine + ATP + H2O = L-asparaginyl-tRNA(Asn) + L-glutamate + ADP + phosphate + 2 H(+). Allows the formation of correctly charged Asn-tRNA(Asn) or Gln-tRNA(Gln) through the transamidation of misacylated Asp-tRNA(Asn) or Glu-tRNA(Gln) in organisms which lack either or both of asparaginyl-tRNA or glutaminyl-tRNA synthetases. The reaction takes place in the presence of glutamine and ATP through an activated phospho-Asp-tRNA(Asn) or phospho-Glu-tRNA(Gln). This Pseudothermotoga lettingae (strain ATCC BAA-301 / DSM 14385 / NBRC 107922 / TMO) (Thermotoga lettingae) protein is Aspartyl/glutamyl-tRNA(Asn/Gln) amidotransferase subunit B.